The sequence spans 388 residues: Flap endonuclease 1 (388 aa).

The N-domain stretch occupies residues 1–104 (MGILGLSKLI…GELAKRAERR (104 aa)). Asp34 contributes to the Mg(2+) binding site. The DNA site is built by Arg47 and Arg70. Asp86, Glu158, Glu160, Asp179, and Asp181 together coordinate Mg(2+). The segment at 122 to 253 (EIEKFNRRLV…KRAIELINSY (132 aa)) is I-domain. Glu158 is a DNA binding site. Positions 231 and 233 each coordinate DNA. Asp233 serves as a coordination point for Mg(2+). The interaction with PCNA stretch occupies residues 336–344 (TQVRLDSFF). The segment at 355–388 (AAAKRKAEEAKKSANNKKAKIGGGGGAGRGRRPK) is disordered.

The protein belongs to the XPG/RAD2 endonuclease family. FEN1 subfamily. In terms of assembly, interacts with PCNA. Three molecules of FEN1 bind to one PCNA trimer with each molecule binding to one PCNA monomer. PCNA stimulates the nuclease activity without altering cleavage specificity. Mg(2+) serves as cofactor. In terms of processing, phosphorylated. Phosphorylation upon DNA damage induces relocalization to the nuclear plasma.

It localises to the nucleus. The protein resides in the nucleolus. It is found in the nucleoplasm. The protein localises to the mitochondrion. Its function is as follows. Structure-specific nuclease with 5'-flap endonuclease and 5'-3' exonuclease activities involved in DNA replication and repair. During DNA replication, cleaves the 5'-overhanging flap structure that is generated by displacement synthesis when DNA polymerase encounters the 5'-end of a downstream Okazaki fragment. It enters the flap from the 5'-end and then tracks to cleave the flap base, leaving a nick for ligation. Also involved in the long patch base excision repair (LP-BER) pathway, by cleaving within the apurinic/apyrimidinic (AP) site-terminated flap. Acts as a genome stabilization factor that prevents flaps from equilibrating into structures that lead to duplications and deletions. Also possesses 5'-3' exonuclease activity on nicked or gapped double-stranded DNA, and exhibits RNase H activity. Also involved in replication and repair of rDNA and in repairing mitochondrial DNA. The sequence is that of Flap endonuclease 1 from Drosophila willistoni (Fruit fly).